The primary structure comprises 1073 residues: Carbamoyl phosphate synthase large chain (1073 aa).

The segment at 2 to 403 (PKRTDIKSIL…SLQKALRGLE (402 aa)) is carboxyphosphate synthetic domain. 12 residues coordinate ATP: R129, R169, G175, G176, E208, L210, E215, G241, I242, H243, Q285, and E299. An ATP-grasp 1 domain is found at 133–328 (DVAMKKIGLE…IAKVAAKLAV (196 aa)). 3 residues coordinate Mg(2+): Q285, E299, and N301. Q285, E299, and N301 together coordinate Mn(2+). Residues 404–553 (VGATGFDPKV…YSTYEEECEA (150 aa)) are oligomerization domain. The interval 554–936 (NPSTDREKIM…AFAKAQLGSN (383 aa)) is carbamoyl phosphate synthetic domain. The ATP-grasp 2 domain occupies 679 to 870 (QHAVERLKLK…LAKVAARVMA (192 aa)). ATP-binding residues include R715, H754, L756, E761, G786, V787, H788, S789, Q829, and E841. Mg(2+)-binding residues include Q829, E841, and N843. Mn(2+)-binding residues include Q829, E841, and N843. Residues 937 to 1073 (STMKKHGRAL…SVQEMHAQIK (137 aa)) enclose the MGS-like domain. Residues 937–1073 (STMKKHGRAL…SVQEMHAQIK (137 aa)) form an allosteric domain region.

It belongs to the CarB family. As to quaternary structure, composed of two chains; the small (or glutamine) chain promotes the hydrolysis of glutamine to ammonia, which is used by the large (or ammonia) chain to synthesize carbamoyl phosphate. Tetramer of heterodimers (alpha,beta)4. Requires Mg(2+) as cofactor. Mn(2+) is required as a cofactor.

The catalysed reaction is hydrogencarbonate + L-glutamine + 2 ATP + H2O = carbamoyl phosphate + L-glutamate + 2 ADP + phosphate + 2 H(+). It carries out the reaction hydrogencarbonate + NH4(+) + 2 ATP = carbamoyl phosphate + 2 ADP + phosphate + 2 H(+). Its pathway is amino-acid biosynthesis; L-arginine biosynthesis; carbamoyl phosphate from bicarbonate: step 1/1. The protein operates within pyrimidine metabolism; UMP biosynthesis via de novo pathway; (S)-dihydroorotate from bicarbonate: step 1/3. Its function is as follows. Large subunit of the glutamine-dependent carbamoyl phosphate synthetase (CPSase). CPSase catalyzes the formation of carbamoyl phosphate from the ammonia moiety of glutamine, carbonate, and phosphate donated by ATP, constituting the first step of 2 biosynthetic pathways, one leading to arginine and/or urea and the other to pyrimidine nucleotides. The large subunit (synthetase) binds the substrates ammonia (free or transferred from glutamine from the small subunit), hydrogencarbonate and ATP and carries out an ATP-coupled ligase reaction, activating hydrogencarbonate by forming carboxy phosphate which reacts with ammonia to form carbamoyl phosphate. This chain is Carbamoyl phosphate synthase large chain, found in Escherichia coli O6:H1 (strain CFT073 / ATCC 700928 / UPEC).